We begin with the raw amino-acid sequence, 64 residues long: Toxin Tce3 (64 aa).

The 62-residue stretch at 1-62 (KDGYIIEHRG…IFDSNNNKCS (62 aa)) folds into the LCN-type CS-alpha/beta domain. 4 disulfides stabilise this stretch: C11-C61, C15-C37, C23-C42, and C27-C44.

This sequence belongs to the long (4 C-C) scorpion toxin superfamily. Sodium channel inhibitor family. Beta subfamily. Expressed by the venom gland.

The protein resides in the secreted. Its function is as follows. Inhibits the sodium (Nav) currents in an apparent irreversible manner. Produces small depolarization and induces repetitive firing in squid axons. Is specific for arthropods (crickets, triatomides, crabs and squids), but is non-toxic to mice. Shows antibacterial activity against both Gram-positive and Gram-negative bacteria. The sequence is that of Toxin Tce3 from Tityus cerroazul (Scorpion).